The primary structure comprises 1107 residues: MDTTFGNGECEMFTSPHQKFCATQTSPSNMKEPDEPGVALKNGQGVHFDYHMHPEARKDSESTVVAGESHSEMPISSNGHNGTIAVPEGYGANSNGTSNKKKKKKSKKRHIDATINDPDAEYPTSRVIKQAPNGDVIVESLEDEHHDHHSNLSATIWDNSTIEEQEDLKRFWESLEEPEKVKLVKIDKKSILDLFRTFSSNQQGGQPTHHSPASSSTSLAGTPHHGCTCSSCGRRSSIIEAELEMIYDNHFDDIIDFIHEVRDIKDLNALPGLLFGGFHMLEEEHRMKKTRARRRSTDLQPQTRISPITSSTDGPPEPTTTSNVSTPSHSESVSSPSPWTNAVAGLLEKFLQENPGASWNKCSQLFQEIQEAGNQVNPGNGSSEGSDRENDDKKTAFLKDFGEMISGGFNDMTSGKQEQFHENFANGIHKIANDFLNNDGKSFVEMVEALSGSRSERADLLKSLQEIEDHSNQQEQPGTVREQIEELHDEEPVIPEDIQNQPKEVVGQYVDQRINQLSELRDRLEEEYDYDTYDDPEYDNQEYDEELSDTESEISEEEKMQEIRRLFLIQVIKLFQERLKNAYKEKLSQDRTRRLIEELEAEENAKKEKELKKLKQKEKAKEKKRLQQVAKDEERRRKEEEERAREEELRLKQEELRAEQKRRKEEARQKKEEEKRKRIEELRLKKEAEKKKQEEKERKERELKEKKERESKEKEEREMMEKKEQLKKEQQPKVEQTQEKPQAPPSQTSQSNPSVSDPISSRQDNSVSSLDPTHDLQNAISSGLEQLSLGQQPMSHISSQPSQSISQLPIQPPSQPFLDMDQIRSPVTAPAMPTQAQMPQSARGSLWGQPVNNFSPFSEGVWGSRNNSIWGNSSMSGGSIGSGTMGSGTIGSGTIGGSASIWGSQTPTLANTTMGMGLQSGINGIQGLSLEKENGSASIAGTPGNSLPGNSLPPISRNSLSGNSIPGSIPSSIPGNLSGSLPGNLSGSIPGSLPGNLAANSLPGMSPSMSVPLPQPFPANVDNEMIRTAAYQAFMLLQNSNQLEYGLAAAVKLYQTTILVLSMEVSFSQFLGSCRDDIESSYRFDYVYDDYGAVSHIKASLRSSLWN.

Disordered stretches follow at residues 21–42, 57–120, 201–226, 286–338, 525–556, 605–775, 791–820, and 935–967; these read CATQ…ALKN, RKDS…DPDA, NQQG…PHHG, RMKK…SPSP, EEEY…EISE, AKKE…PTHD, QQPM…FLDM, and GSAS…SIPG. Positions 99–110 are enriched in basic residues; that stretch reads NKKKKKKSKKRH. A compositionally biased stretch (low complexity) spans 207-226; that stretch reads PTHHSPASSSTSLAGTPHHG. Residues 298–313 are compositionally biased toward polar residues; the sequence is DLQPQTRISPITSSTD. Positions 321–338 are enriched in low complexity; sequence TSNVSTPSHSESVSSPSP. Residues 508-733 are a coiled coil; it reads QYVDQRINQL…EQLKKEQQPK (226 aa). Composition is skewed to basic and acidic residues over residues 605-621 and 630-738; these read AKKE…EKAK and AKDE…EQTQ. Residues 745–775 are compositionally biased toward polar residues; sequence PSQTSQSNPSVSDPISSRQDNSVSSLDPTHD. Low complexity predominate over residues 791 to 809; sequence QQPMSHISSQPSQSISQLP. The segment covering 935–949 has biased composition (polar residues); sequence GSASIAGTPGNSLPG. Residues 958 to 967 are compositionally biased toward low complexity; the sequence is NSLSGNSIPG.

The protein belongs to the NST1 family.

The protein resides in the cytoplasm. In terms of biological role, may act as a negative regulator of salt tolerance. The polypeptide is Stress response protein NST1 (NST1) (Meyerozyma guilliermondii (strain ATCC 6260 / CBS 566 / DSM 6381 / JCM 1539 / NBRC 10279 / NRRL Y-324) (Yeast)).